A 166-amino-acid chain; its full sequence is Nucleotide-binding protein Dred_1927 (166 aa).

Belongs to the YajQ family.

Functionally, nucleotide-binding protein. The sequence is that of Nucleotide-binding protein Dred_1927 from Desulforamulus reducens (strain ATCC BAA-1160 / DSM 100696 / MI-1) (Desulfotomaculum reducens).